The primary structure comprises 291 residues: 3-methylcatechol 2,3-dioxygenase (291 aa).

2 VOC domains span residues 5–119 and 143–264; these read RLGY…IYYG and GLGH…YGWG. Positions 146, 210, and 260 each coordinate Fe cation.

It belongs to the extradiol ring-cleavage dioxygenase family. In terms of assembly, homooctamer. It depends on Fe(2+) as a cofactor.

The catalysed reaction is 3-methylcatechol + O2 = 2-hydroxy-6-oxo-2,4-heptadienoate + H(+). Its pathway is xenobiotic degradation; toluene degradation. The sequence is that of 3-methylcatechol 2,3-dioxygenase (todE) from Pseudomonas putida (strain ATCC 700007 / DSM 6899 / JCM 31910 / BCRC 17059 / LMG 24140 / F1).